A 108-amino-acid chain; its full sequence is Large ribosomal subunit protein uL23 (108 aa).

Belongs to the universal ribosomal protein uL23 family. In terms of assembly, part of the 50S ribosomal subunit. Contacts protein L29, and trigger factor when it is bound to the ribosome.

Its function is as follows. One of the early assembly proteins it binds 23S rRNA. One of the proteins that surrounds the polypeptide exit tunnel on the outside of the ribosome. Forms the main docking site for trigger factor binding to the ribosome. The protein is Large ribosomal subunit protein uL23 of Polaromonas sp. (strain JS666 / ATCC BAA-500).